A 407-amino-acid polypeptide reads, in one-letter code: SERPINE1 mRNA-binding protein 1 (407 aa).

At serine 25 the chain carries Phosphoserine. A disordered region spans residues 33 to 227 (AAENKKKEAG…GSGSHNWGTV (195 aa)). Residues 51–68 (AKSAAQAAAQTNSNAAGK) show a composition bias toward low complexity. Lysine 52 is subject to N6-acetyllysine; alternate. Residue lysine 52 forms a Glycyl lysine isopeptide (Lys-Gly) (interchain with G-Cter in SUMO1); alternate linkage. The residue at position 68 (lysine 68) is an N6-acetyllysine. Composition is skewed to basic and acidic residues over residues 70–80 (LRKESQKDRKN), 89–114 (VDKK…RRPD), and 122–162 (KIID…DRPI). Residue lysine 102 forms a Glycyl lysine isopeptide (Lys-Gly) (interchain with G-Cter in SUMO1); alternate linkage. A Glycyl lysine isopeptide (Lys-Gly) (interchain with G-Cter in SUMO2) cross-link involves residue lysine 102. Residue lysine 102 forms a Glycyl lysine isopeptide (Lys-Gly) (interchain with G-Cter in SUMO2); alternate linkage. Residues lysine 122 and lysine 140 each carry the N6-acetyllysine modification. The segment covering 164 to 182 (GRGGLGRGRGGRGRGMGRG) has biased composition (gly residues). Residues arginine 165 and arginine 188 each carry the omega-N-methylarginine modification. The span at 183–199 (DGFDSRGKREFDRHSGS) shows a compositional bias: basic and acidic residues. 5 positions are modified to phosphoserine: serine 197, serine 199, serine 203, serine 205, and serine 208. N6-acetyllysine; alternate is present on lysine 211. A Glycyl lysine isopeptide (Lys-Gly) (interchain with G-Cter in SUMO2); alternate cross-link involves residue lysine 211. Arginine 216 is modified (omega-N-methylarginine). Position 221 is a phosphoserine (serine 221). A Phosphothreonine modification is found at threonine 226. A Glycyl lysine isopeptide (Lys-Gly) (interchain with G-Cter in SUMO1); alternate cross-link involves residue lysine 228. Lysine 228 participates in a covalent cross-link: Glycyl lysine isopeptide (Lys-Gly) (interchain with G-Cter in SUMO2); alternate. The residue at position 234 (serine 234) is a Phosphoserine. A compositionally biased stretch (polar residues) spans 242–256 (ISYNCSDLDQSNVTE). Disordered regions lie at residues 242 to 291 (ISYN…TLDE) and 327 to 407 (SKSE…PALA). Positions 261–274 (GEEHPVADTENKEN) are enriched in basic and acidic residues. Lysine 280 participates in a covalent cross-link: Glycyl lysine isopeptide (Lys-Gly) (interchain with G-Cter in SUMO1); alternate. Residue lysine 280 forms a Glycyl lysine isopeptide (Lys-Gly) (interchain with G-Cter in SUMO2) linkage. A Glycyl lysine isopeptide (Lys-Gly) (interchain with G-Cter in SUMO2); alternate cross-link involves residue lysine 280. Basic and acidic residues-rich tracts occupy residues 281 to 291 (EEGPKEMTLDE) and 327 to 341 (SKSE…VMDH). N6-acetyllysine is present on lysine 328. Position 329 is a phosphoserine (serine 329). Residues 362 to 371 (GRPGRGGRGG) are compositionally biased toward gly residues. Arginine 363, arginine 366, and arginine 369 each carry omega-N-methylarginine. Residues serine 391 and serine 393 each carry the phosphoserine modification.

This sequence belongs to the SERBP1-HABP4 family. As to quaternary structure, associates with mature 80S ribosomes. Interacts with EEF2/eEF2; interaction sequesters EEF2/eEF2 at the A-site of the ribosome, thereby blocking the interaction sites of the mRNA-tRNA complex, promoting ribosome stabilization and hibernation. Interacts with SPIN1. Interacts with CHD3 and TDRD3. Interacts with ZDHHC17 (via ANK repeats). In terms of processing, phosphorylation by MTOR inhibits SERBP1 and relieves ribosome hibernation.

Ribosome-binding protein that promotes ribosome hibernation, a process during which ribosomes are stabilized in an inactive state and preserved from proteasomal degradation. Acts via its association with EEF2/eEF2 factor, sequestering EEF2/eEF2 at the A-site of the ribosome and promoting ribosome stabilization and storage in an inactive state. May also play a role in the regulation of mRNA stability: binds to the 3'-most 134 nt of the SERPINE1/PAI1 mRNA, a region which confers cyclic nucleotide regulation of message decay. Seems to play a role in PML-nuclear bodies formation. The polypeptide is SERPINE1 mRNA-binding protein 1 (Oryctolagus cuniculus (Rabbit)).